Consider the following 503-residue polypeptide: UDP-N-acetylglucosamine--peptide N-acetylglucosaminyltransferase GtfA subunit (503 aa).

The interval 1–78 (MTIYNINLGI…FTDIKIAPTS (78 aa)) is N-terminus R-fold-1. Residue 16-19 (GVEY) participates in UDP binding. The interval 79–195 (VTVDDVLAYF…VYHFKDKIFY (117 aa)) is extended beta-sheet domain. Positions 196-306 (GKQAFVRAFM…QPKIVTIPVG (111 aa)) are C-terminus R-fold-1. His242 provides a ligand contact to N-acetyl-D-glucosamine. The tract at residues 307–503 (SIDSLTDSSQ…KKTVEEVLHD (197 aa)) is R-fold-2. Arg328 contacts UDP. Glu332 is an N-acetyl-D-glucosamine binding site. UDP is bound by residues Lys333, Gly358, and 384 to 385 (HA). 404–407 (EGFG) provides a ligand contact to N-acetyl-D-glucosamine. 408-412 (LTLME) provides a ligand contact to UDP.

This sequence belongs to the glycosyltransferase group 1 family. Glycosyltransferase 4 subfamily. Monomer. Interacts with stabilizing protein GtfB, probably as a heterotetramer with 2 subunits each of GtfA and GtfB, part of the accessory SecA2/SecY2 protein translocation apparatus.

The protein resides in the cytoplasm. Its subcellular location is the cell membrane. It catalyses the reaction L-seryl-[protein] + UDP-N-acetyl-alpha-D-glucosamine = 3-O-[N-acetyl-alpha-D-glucosaminyl]-L-seryl-[protein] + UDP + H(+). It functions in the pathway protein modification; protein glycosylation. In terms of biological role, required for the polymorphic O-glycosylation of serine-rich repeat protein PsrP. Catalyzes the first step in glycosylation by transferring N-acetylglucosamine from UDP-GlcNAc to serine residues in PsrP. Part of the accessory SecA2/SecY2 system specifically required to export serine-rich repeat cell wall proteins encoded upstream in the same operon. The GtfA-GtfB complex adds GlcNAc from UDP-GlcNAc to PsrP (experimentally characterized with truncated PsrP-SSR1 constructs); this subunit alone has weak N-acetylglucosaminyl transferase activity that is 10-fold stimulated by GtfB. The complex requires at least a 25 residue-long peptide for activity; the in vitro assay has only been seen to glycosylate Ser residues. The alpha linkage was shown in L.reuteri. The protein is UDP-N-acetylglucosamine--peptide N-acetylglucosaminyltransferase GtfA subunit of Streptococcus pneumoniae serotype 4 (strain ATCC BAA-334 / TIGR4).